The following is a 396-amino-acid chain: NADH-quinone oxidoreductase subunit D (396 aa).

This sequence belongs to the complex I 49 kDa subunit family. In terms of assembly, NDH-1 is composed of 14 different subunits. Subunits NuoB, C, D, E, F, and G constitute the peripheral sector of the complex.

It localises to the cell inner membrane. It carries out the reaction a quinone + NADH + 5 H(+)(in) = a quinol + NAD(+) + 4 H(+)(out). NDH-1 shuttles electrons from NADH, via FMN and iron-sulfur (Fe-S) centers, to quinones in the respiratory chain. The immediate electron acceptor for the enzyme in this species is believed to be ubiquinone. Couples the redox reaction to proton translocation (for every two electrons transferred, four hydrogen ions are translocated across the cytoplasmic membrane), and thus conserves the redox energy in a proton gradient. The sequence is that of NADH-quinone oxidoreductase subunit D from Rhodopseudomonas palustris (strain BisB18).